Here is a 299-residue protein sequence, read N- to C-terminus: Bifunctional protein FolD 2 (299 aa).

Residues 168–170 (GRS), Ser193, and Ile234 each bind NADP(+).

It belongs to the tetrahydrofolate dehydrogenase/cyclohydrolase family. As to quaternary structure, homodimer.

It carries out the reaction (6R)-5,10-methylene-5,6,7,8-tetrahydrofolate + NADP(+) = (6R)-5,10-methenyltetrahydrofolate + NADPH. The enzyme catalyses (6R)-5,10-methenyltetrahydrofolate + H2O = (6R)-10-formyltetrahydrofolate + H(+). Its pathway is one-carbon metabolism; tetrahydrofolate interconversion. Catalyzes the oxidation of 5,10-methylenetetrahydrofolate to 5,10-methenyltetrahydrofolate and then the hydrolysis of 5,10-methenyltetrahydrofolate to 10-formyltetrahydrofolate. The chain is Bifunctional protein FolD 2 from Rhizobium meliloti (strain 1021) (Ensifer meliloti).